A 508-amino-acid chain; its full sequence is Photosystem II CP47 reaction center protein (508 aa).

Helical transmembrane passes span 21-36 (SVHIMHTALVAGWAGS), 101-115 (IVFSGLCFLAAIWHW), 140-156 (GIHLFLSGVACFGFGAF), 203-218 (IAAGTLGILAGLFHLS), 237-252 (VLSSSIAAVFFAAFVV), and 457-472 (SFALLFFFGHIWHGAR).

The protein belongs to the PsbB/PsbC family. PsbB subfamily. In terms of assembly, PSII is composed of 1 copy each of membrane proteins PsbA, PsbB, PsbC, PsbD, PsbE, PsbF, PsbH, PsbI, PsbJ, PsbK, PsbL, PsbM, PsbT, PsbX, PsbY, PsbZ, Psb30/Ycf12, at least 3 peripheral proteins of the oxygen-evolving complex and a large number of cofactors. It forms dimeric complexes. Binds multiple chlorophylls. PSII binds additional chlorophylls, carotenoids and specific lipids. is required as a cofactor.

It is found in the plastid. The protein resides in the chloroplast thylakoid membrane. In terms of biological role, one of the components of the core complex of photosystem II (PSII). It binds chlorophyll and helps catalyze the primary light-induced photochemical processes of PSII. PSII is a light-driven water:plastoquinone oxidoreductase, using light energy to abstract electrons from H(2)O, generating O(2) and a proton gradient subsequently used for ATP formation. The polypeptide is Photosystem II CP47 reaction center protein (Manihot esculenta (Cassava)).